The following is a 186-amino-acid chain: Adenine phosphoribosyltransferase (186 aa).

132–136 (ATGGS) serves as a coordination point for AMP.

Belongs to the purine/pyrimidine phosphoribosyltransferase family. In terms of assembly, homodimer. Mg(2+) serves as cofactor.

The protein localises to the cytoplasm. It is found in the nucleus. The catalysed reaction is AMP + diphosphate = 5-phospho-alpha-D-ribose 1-diphosphate + adenine. It functions in the pathway purine metabolism; AMP biosynthesis via salvage pathway; AMP from adenine: step 1/1. Functionally, catalyzes a salvage reaction resulting in the formation of AMP, that is energically less costly than de novo synthesis. This Debaryomyces hansenii (strain ATCC 36239 / CBS 767 / BCRC 21394 / JCM 1990 / NBRC 0083 / IGC 2968) (Yeast) protein is Adenine phosphoribosyltransferase (APT1).